The primary structure comprises 291 residues: Glycine--tRNA ligase alpha subunit (291 aa).

The protein belongs to the class-II aminoacyl-tRNA synthetase family. Tetramer of two alpha and two beta subunits.

It is found in the cytoplasm. The catalysed reaction is tRNA(Gly) + glycine + ATP = glycyl-tRNA(Gly) + AMP + diphosphate. This chain is Glycine--tRNA ligase alpha subunit, found in Coprothermobacter proteolyticus (strain ATCC 35245 / DSM 5265 / OCM 4 / BT).